The sequence spans 166 residues: NAD(P)H-quinone oxidoreductase subunit I, chloroplastic (166 aa).

2 consecutive 4Fe-4S ferredoxin-type domains span residues 55–84 and 95–124; these read GRIHFEFDKCIACEVCVRVCPIDLPVVDWK and LNYSIDFGICIFCGNCVEYCPTNCLSMTEE. [4Fe-4S] cluster contacts are provided by Cys64, Cys67, Cys70, Cys74, Cys104, Cys107, Cys110, and Cys114.

The protein belongs to the complex I 23 kDa subunit family. As to quaternary structure, NDH is composed of at least 16 different subunits, 5 of which are encoded in the nucleus. Requires [4Fe-4S] cluster as cofactor.

Its subcellular location is the plastid. The protein resides in the chloroplast thylakoid membrane. The catalysed reaction is a plastoquinone + NADH + (n+1) H(+)(in) = a plastoquinol + NAD(+) + n H(+)(out). The enzyme catalyses a plastoquinone + NADPH + (n+1) H(+)(in) = a plastoquinol + NADP(+) + n H(+)(out). In terms of biological role, NDH shuttles electrons from NAD(P)H:plastoquinone, via FMN and iron-sulfur (Fe-S) centers, to quinones in the photosynthetic chain and possibly in a chloroplast respiratory chain. The immediate electron acceptor for the enzyme in this species is believed to be plastoquinone. Couples the redox reaction to proton translocation, and thus conserves the redox energy in a proton gradient. The protein is NAD(P)H-quinone oxidoreductase subunit I, chloroplastic of Tridax balbisioides (Coatbuttons).